The following is a 792-amino-acid chain: MASKTKASEALKVVARCRPLSRKEEAAGHEQILTMDVKLGQVTLRNPRAALGELPKTFTFDAVYDASSKQADLYDETVRPLVDSVLQGFNGTVFAYGQTGTGKTYTMQGTWVEPEQRGVIPNAFEHIFTHISRSQNQQYLVRASYLEIYQEEIRDLVSKEPGKRLELKENPETGVYIKDLSSFVTKNVKEIEHVMNLGNQTRAVGSTHMNEVSSRSHAIFVITVECSERGSDGQDHIRVGKLNLVDLAGSERQNKAGPNTTGGTATQPTGGGGGGGGGGGGGERPKEASKINLSLSALGNVIAALSGNRSTHIPYRDSKLTRLLQDSLGGNAKTIMVATLGPASHSYDESLSTLRFANRAKNIKNKPRVNEDPKDTLLREFQEEIARLKAQLEKKGMLGKRLRRKSSRRKKAVSAPAGYPEGPVIEAWVAEEEDDNNNNHRPPQPILETALDKNMENYLQEQKERLEEEKAAIQDDRSLVSEEKKKLLEEKEKMLEDLRREQEATELLAAKYKAMESKLLIGGRNIMDHTNEQQKMLELKRQEIAEQKRREREMQQEMMLRDEETMELRGTYTSLQQEVEVKTKKLKKLYAKLQAVKAEIQDQHDEYIRVRQDLEEAQNEQTRELKLKYLIIENFIPPEEKNKIMNRLFLDCEEEQWKFQPLVPSGANSSQMKKRPTSAVGYKRPISQYARVAMAMGSHPRYRAENIMFLELDVSPPAVFEMEFSHDQDQDPRALHMERLMRLDSFLERPSTSKVRKSRSWCQSPQRPPPPTAHASLAASAALRPTTVLDHE.

The Kinesin motor domain maps to 10–363; sequence ALKVVARCRP…LRFANRAKNI (354 aa). 97 to 104 lines the ATP pocket; that stretch reads GQTGTGKT. Disordered stretches follow at residues 249–287, 397–418, and 749–792; these read GSERQNKAGPNTTGGTATQPTGGGGGGGGGGGGGERPKE, MLGKRLRRKSSRRKKAVSAPAG, and RPST…LDHE. Positions 257–268 are enriched in low complexity; it reads GPNTTGGTATQP. A compositionally biased stretch (gly residues) spans 269 to 282; the sequence is TGGGGGGGGGGGGG. Residues 374–627 adopt a coiled-coil conformation; that stretch reads KDTLLREFQE…QNEQTRELKL (254 aa). A compositionally biased stretch (basic residues) spans 397–412; it reads MLGKRLRRKSSRRKKA. A globular region spans residues 628-792; the sequence is KYLIIENFIP…LRPTTVLDHE (165 aa). Residues 773–792 are compositionally biased toward low complexity; sequence AHASLAASAALRPTTVLDHE.

Belongs to the TRAFAC class myosin-kinesin ATPase superfamily. Kinesin family. Kinesin II subfamily. As to quaternary structure, heterodimer of KIF3A and KIF3C.

The protein resides in the cytoplasm. It localises to the cytoskeleton. In terms of biological role, microtubule-based anterograde translocator for membranous organelles. The chain is Kinesin-like protein KIF3C (KIF3C) from Bos taurus (Bovine).